We begin with the raw amino-acid sequence, 131 residues long: UPF0146 protein PH0209 (131 aa).

It belongs to the UPF0146 family.

The sequence is that of UPF0146 protein PH0209 from Pyrococcus horikoshii (strain ATCC 700860 / DSM 12428 / JCM 9974 / NBRC 100139 / OT-3).